Consider the following 852-residue polypeptide: Metastasis-associated in colon cancer protein 1 (852 aa).

Ser-19 bears the Phosphoserine mark. The 138-residue stretch at 212 to 349 folds into the ZU5 domain; sequence VTIACKVNHQ…LSQVMYLVVA (138 aa). The SH3 domain occupies 549 to 619; the sequence is NFSNYGVTLK…HCKNVKVISK (71 aa).

In terms of assembly, interacts with FASLG. In terms of tissue distribution, preferentially expressed in metastasizing tumors.

It localises to the cytoplasm. Its subcellular location is the nucleus. Its function is as follows. Acts as a transcription activator for MET and as a key regulator of HGF-MET signaling. Promotes cell motility, proliferation and hepatocyte growth factor (HGF)-dependent scattering in vitro and tumor growth and metastasis in vivo. The sequence is that of Metastasis-associated in colon cancer protein 1 (MACC1) from Homo sapiens (Human).